Reading from the N-terminus, the 388-residue chain is Leucine aminopeptidase 1 (388 aa).

The signal sequence occupies residues 1-19 (MKSLSLLALAAIAPPAAVA). Residues 20–88 (AVVDRQVPFE…SAKSHERIQV (69 aa)) constitute a propeptide that is removed on maturation. Asn180 carries an N-linked (GlcNAc...) asparagine glycan. Zn(2+) contacts are provided by His188, Asp207, Glu246, and Asp273. Residues Cys322 and Cys326 are joined by a disulfide bond. His355 is a Zn(2+) binding site.

The protein belongs to the peptidase M28 family. M28E subfamily. As to quaternary structure, monomer. Requires Zn(2+) as cofactor.

The protein resides in the secreted. Its function is as follows. Extracellular aminopeptidase that allows assimilation of proteinaceous substrates. The chain is Leucine aminopeptidase 1 (LAP1) from Coccidioides posadasii (strain C735) (Valley fever fungus).